The following is a 430-amino-acid chain: MSQGLIETTTIVETRELGHQIHASLLEQLKLQQEELLQQQRDLFFQEQQLQQQANHPVSNNGNTWSFTQGLVIGQISVIFIIIVFVKFFVFADSSSHIPTKPGLDGATGVIVKRNKKKQHLNGQFANDDGNEDDISLNSNESKISSILEKTYYDVNNHASESLDWFNVLVAQTISQLRSEALLKDNIYHSLNNFLTNAKLPDFIDTINLTEIDIGDDFPIFSNCRIKYGEDLKRLEAKIDVDLSDTLTLGIATKLLLNQPRPLTAVLPVSLTVSIVRFSGCLTVSLINTKDIDLKNFNKASNMNGYSKENGSADSASDNDEDEDDGGTALMFSFSPDYRLEFIVKSLIGSRAKLQDVPKISSLIENQLRTWFIERCVEPRFQVVRLPSLWPRTKNTREPVIKKTPTTSTTINGTSAATVTTPGEFVNSNI.

At 1 to 70 (MSQGLIETTT…NGNTWSFTQG (70 aa)) the chain is on the lumenal side. A helical transmembrane segment spans residues 71–91 (LVIGQISVIFIIIVFVKFFVF). Topologically, residues 92 to 430 (ADSSSHIPTK…TPGEFVNSNI (339 aa)) are cytoplasmic. The region spanning 159-387 (ASESLDWFNV…EPRFQVVRLP (229 aa)) is the SMP-LTD domain. The segment at 305–326 (GYSKENGSADSASDNDEDEDDG) is disordered. The segment covering 317–326 (SDNDEDEDDG) has biased composition (acidic residues).

It belongs to the MMM1 family. As to quaternary structure, homodimer. Component of the ER-mitochondria encounter structure (ERMES) or MDM complex, composed of MMM1, MDM10, MDM12 and MDM34. An MMM1 homodimer associates with one molecule of MDM12 on each side in a pairwise head-to-tail manner, and the SMP-LTD domains of MMM1 and MDM12 generate a continuous hydrophobic tunnel for phospholipid trafficking.

Its subcellular location is the endoplasmic reticulum membrane. Its function is as follows. Component of the ERMES/MDM complex, which serves as a molecular tether to connect the endoplasmic reticulum (ER) and mitochondria. Components of this complex are involved in the control of mitochondrial shape and protein biogenesis, and function in nonvesicular lipid trafficking between the ER and mitochondria. The MDM12-MMM1 subcomplex functions in the major beta-barrel assembly pathway that is responsible for biogenesis of all outer membrane beta-barrel proteins, and acts in a late step after the SAM complex. The MDM10-MDM12-MMM1 subcomplex further acts in the TOM40-specific pathway after the action of the MDM12-MMM1 complex. Essential for establishing and maintaining the structure of mitochondria and maintenance of mtDNA nucleoids. The sequence is that of Maintenance of mitochondrial morphology protein 1 from Candida dubliniensis (strain CD36 / ATCC MYA-646 / CBS 7987 / NCPF 3949 / NRRL Y-17841) (Yeast).